The chain runs to 336 residues: Fructose-1,6-bisphosphatase class 1 (336 aa).

The Mg(2+) site is built by glutamate 90, aspartate 112, leucine 114, and aspartate 115. Substrate is bound by residues 115-118 (DGSS), asparagine 211, and lysine 277. A Mg(2+)-binding site is contributed by glutamate 283.

The protein belongs to the FBPase class 1 family. In terms of assembly, homotetramer. Mg(2+) is required as a cofactor.

The protein localises to the cytoplasm. The catalysed reaction is beta-D-fructose 1,6-bisphosphate + H2O = beta-D-fructose 6-phosphate + phosphate. Its pathway is carbohydrate biosynthesis; gluconeogenesis. The protein is Fructose-1,6-bisphosphatase class 1 of Pseudomonas putida (strain ATCC 700007 / DSM 6899 / JCM 31910 / BCRC 17059 / LMG 24140 / F1).